A 327-amino-acid chain; its full sequence is Elongation factor P--(R)-beta-lysine ligase (327 aa).

80 to 82 (SPE) lines the substrate pocket. ATP is bound by residues 104-106 (RNE) and Asn113. Residue Tyr122 participates in substrate binding. Residue 246–247 (EL) participates in ATP binding. Residue Glu253 participates in substrate binding. Position 302 (Gly302) interacts with ATP.

The protein belongs to the class-II aminoacyl-tRNA synthetase family. EpmA subfamily. Homodimer.

The catalysed reaction is D-beta-lysine + L-lysyl-[protein] + ATP = N(6)-((3R)-3,6-diaminohexanoyl)-L-lysyl-[protein] + AMP + diphosphate + H(+). Functionally, with EpmB is involved in the beta-lysylation step of the post-translational modification of translation elongation factor P (EF-P). Catalyzes the ATP-dependent activation of (R)-beta-lysine produced by EpmB, forming a lysyl-adenylate, from which the beta-lysyl moiety is then transferred to the epsilon-amino group of a conserved specific lysine residue in EF-P. The chain is Elongation factor P--(R)-beta-lysine ligase from Haemophilus ducreyi (strain 35000HP / ATCC 700724).